The following is a 976-amino-acid chain: Ephrin type-B receptor 4b (976 aa).

A signal peptide spans 1-23 (MDRVCWIMALSWFWMVSTGLVSA). At 24–541 (EEEVLMNTKL…ESPSRLMLTG (518 aa)) the chain is on the extracellular side. Residues 25–204 (EEVLMNTKLE…FFKKCPAVSR (180 aa)) form the Eph LBD domain. Intrachain disulfides connect Cys69–Cys186 and Cys103–Cys113. Fibronectin type-III domains are found at residues 326–434 (PPSA…TSRD) and 438–529 (PVSG…TLPD). Residues 542 to 562 (VLVAIGLLILIAVVIVAVFCF) form a helical membrane-spanning segment. Topologically, residues 563 to 976 (RRSTRRRDPD…LRIHGGSLRY (414 aa)) are cytoplasmic. The Protein kinase domain occupies 613–897 (VKIEEVIGAG…IPDGPSHPLL (285 aa)). ATP contacts are provided by residues 619–627 (IGAGEFGEV) and Lys645. Asp738 functions as the Proton acceptor in the catalytic mechanism. In terms of domain architecture, SAM spans 906–970 (SHCSSVADWL…LSSVQTLRIH (65 aa)).

This sequence belongs to the protein kinase superfamily. Tyr protein kinase family. Ephrin receptor subfamily.

It is found in the cell membrane. It catalyses the reaction L-tyrosyl-[protein] + ATP = O-phospho-L-tyrosyl-[protein] + ADP + H(+). In terms of biological role, receptor tyrosine kinase which binds promiscuously transmembrane ephrin-B family ligands residing on adjacent cells, leading to contact-dependent bidirectional signaling into neighboring cells. The signaling pathway downstream of the receptor is referred to as forward signaling while the signaling pathway downstream of the ephrin ligand is referred to as reverse signaling. Together with its cognate ligand/functional ligand EFNB2 is involved in the regulation of cell adhesion and cell migration, and plays a central role in heart morphogenesis, angiogenesis and blood vessel remodeling and permeability. EPHB4-mediated forward signaling controls cellular repulsion and segregation from EFNB2-expressing cells. Involved in somitogenesis. The chain is Ephrin type-B receptor 4b from Danio rerio (Zebrafish).